The primary structure comprises 391 residues: Imidazolonepropionase (391 aa).

Fe(3+)-binding residues include H72 and H74. 2 residues coordinate Zn(2+): H72 and H74. 4-imidazolone-5-propanoate contacts are provided by R81, Y139, and H166. Residue Y139 participates in N-formimidoyl-L-glutamate binding. H229 is a binding site for Fe(3+). A Zn(2+)-binding site is contributed by H229. Q232 contacts 4-imidazolone-5-propanoate. D303 contributes to the Fe(3+) binding site. D303 contributes to the Zn(2+) binding site. The N-formimidoyl-L-glutamate site is built by N305 and G307. S308 provides a ligand contact to 4-imidazolone-5-propanoate.

This sequence belongs to the metallo-dependent hydrolases superfamily. HutI family. Requires Zn(2+) as cofactor. Fe(3+) serves as cofactor.

It is found in the cytoplasm. It carries out the reaction 4-imidazolone-5-propanoate + H2O = N-formimidoyl-L-glutamate. It functions in the pathway amino-acid degradation; L-histidine degradation into L-glutamate; N-formimidoyl-L-glutamate from L-histidine: step 3/3. In terms of biological role, catalyzes the hydrolytic cleavage of the carbon-nitrogen bond in imidazolone-5-propanoate to yield N-formimidoyl-L-glutamate. It is the third step in the universal histidine degradation pathway. This chain is Imidazolonepropionase, found in Streptomyces coelicolor (strain ATCC BAA-471 / A3(2) / M145).